The chain runs to 412 residues: Argininosuccinate synthase (412 aa).

Position 10–18 (10–18 (AYSGGLDTS)) interacts with ATP. An L-citrulline-binding site is contributed by Y89. An ATP-binding site is contributed by G119. L-aspartate-binding residues include T121, N125, and D126. Residue N125 coordinates L-citrulline. Residues R129, S177, E261, and Y273 each contribute to the L-citrulline site.

This sequence belongs to the argininosuccinate synthase family. Type 1 subfamily. As to quaternary structure, homotetramer.

It is found in the cytoplasm. The catalysed reaction is L-citrulline + L-aspartate + ATP = 2-(N(omega)-L-arginino)succinate + AMP + diphosphate + H(+). The protein operates within amino-acid biosynthesis; L-arginine biosynthesis; L-arginine from L-ornithine and carbamoyl phosphate: step 2/3. In Bifidobacterium longum subsp. infantis (strain ATCC 15697 / DSM 20088 / JCM 1222 / NCTC 11817 / S12), this protein is Argininosuccinate synthase.